Here is a 188-residue protein sequence, read N- to C-terminus: GTPase KRas (188 aa).

Residues 10-18 (GAGGVGKSA), 29-35 (VDEYDPT), 59-60 (AG), and 116-119 (NKYD) contribute to the GTP site. The short motif at 32-40 (YDPTIEDSY) is the Effector region element. Residues 167–188 (KEKMSKEGKKKKKKSKTKCILM) form a disordered region. Cys-185 carries the cysteine methyl ester modification. Cys-185 is lipidated: S-farnesyl cysteine. Residues 186–188 (ILM) constitute a propeptide, removed in mature form.

It belongs to the small GTPase superfamily. Ras family.

The protein localises to the cell membrane. It is found in the cytoplasm. It catalyses the reaction GTP + H2O = GDP + phosphate + H(+). Alternates between an inactive form bound to GDP and an active form bound to GTP. Activated by a guanine nucleotide-exchange factor (GEF) and inactivated by a GTPase-activating protein (GAP). Functionally, ras proteins bind GDP/GTP and possess intrinsic GTPase activity. Plays an important role in the regulation of cell proliferation. May play a role in promoting oncogenic events by inducing transcriptional silencing of tumor suppressor genes (TSGs). The protein is GTPase KRas (kras) of Kryptolebias marmoratus (Mangrove killifish).